The following is a 276-amino-acid chain: MPVKGFKPYSPGRRQMTVSTFEEITKTTPERSLLAPLKSKAGRNNQGKLTVRHQGGGHKRKYRLIDFKRNKDSVPAKVASIEYDPNRSANIALLHYLDGHKAYILAPNGLQVGQMVVSGPDADIKVGNALPIKNIPVGTLLHNIEMKPGKGAQLVRSAGGSAQLMAKEGKYATLRLPSGEMRMVHIDCRATIGQVGNLEHENINIGKAGRSRWLGIRPTVRGAVMNPNDHPHGGGEGRNPIGRNPVTPWGKPALGAKTRKKKNPSNRFIVKRRGKK.

A disordered region spans residues 225-276 (MNPNDHPHGGGEGRNPIGRNPVTPWGKPALGAKTRKKKNPSNRFIVKRRGKK). Residues 257-276 (KTRKKKNPSNRFIVKRRGKK) show a composition bias toward basic residues.

It belongs to the universal ribosomal protein uL2 family. In terms of assembly, part of the 50S ribosomal subunit. Forms a bridge to the 30S subunit in the 70S ribosome.

In terms of biological role, one of the primary rRNA binding proteins. Required for association of the 30S and 50S subunits to form the 70S ribosome, for tRNA binding and peptide bond formation. It has been suggested to have peptidyltransferase activity; this is somewhat controversial. Makes several contacts with the 16S rRNA in the 70S ribosome. This chain is Large ribosomal subunit protein uL2, found in Desulfitobacterium hafniense (strain DSM 10664 / DCB-2).